Reading from the N-terminus, the 158-residue chain is Protein NrdI (158 aa).

It belongs to the NrdI family.

Probably involved in ribonucleotide reductase function. In Rhodococcus jostii (strain RHA1), this protein is Protein NrdI.